Here is a 314-residue protein sequence, read N- to C-terminus: Putative 4-hydroxy-2-oxoglutarate aldolase, mitochondrial (314 aa).

Threonine 50–asparagine 51 contacts substrate. Catalysis depends on lysine 171, which acts as the Schiff-base intermediate with substrate.

The protein belongs to the DapA family.

The catalysed reaction is (4S)-4-hydroxy-2-oxoglutarate = glyoxylate + pyruvate. It catalyses the reaction (4R)-4-hydroxy-2-oxoglutarate = glyoxylate + pyruvate. In terms of biological role, may catalyze the final step in the metabolic pathway of hydroxyproline. The polypeptide is Putative 4-hydroxy-2-oxoglutarate aldolase, mitochondrial (Coccidioides immitis (strain RS) (Valley fever fungus)).